The following is a 432-amino-acid chain: Anaerobic glycerol-3-phosphate dehydrogenase subunit B (432 aa).

This sequence belongs to the anaerobic G-3-P dehydrogenase subunit B family. Composed of a catalytic GlpA/B dimer and of membrane bound GlpC. The cofactor is FMN.

It catalyses the reaction a quinone + sn-glycerol 3-phosphate = dihydroxyacetone phosphate + a quinol. It participates in polyol metabolism; glycerol degradation via glycerol kinase pathway; glycerone phosphate from sn-glycerol 3-phosphate (anaerobic route): step 1/1. Functionally, conversion of glycerol 3-phosphate to dihydroxyacetone. Uses fumarate or nitrate as electron acceptor. This chain is Anaerobic glycerol-3-phosphate dehydrogenase subunit B, found in Histophilus somni (strain 129Pt) (Haemophilus somnus).